The chain runs to 433 residues: Enolase (433 aa).

Q167 provides a ligand contact to (2R)-2-phosphoglycerate. Residue E209 is the Proton donor of the active site. D246 contributes to the Mg(2+) binding site. Residues 252–260 (FYDAEKKEY) carry the Plasminogen-binding motif motif. Residues E291 and D318 each contribute to the Mg(2+) site. (2R)-2-phosphoglycerate is bound by residues K343, R372, S373, and K394. The Proton acceptor role is filled by K343.

Belongs to the enolase family. As to quaternary structure, component of the RNA degradosome, a multiprotein complex involved in RNA processing and mRNA degradation. The cofactor is Mg(2+).

It localises to the cell inner membrane. Its subcellular location is the cell outer membrane. The protein localises to the cytoplasm. It is found in the secreted. The protein resides in the cell surface. The enzyme catalyses (2R)-2-phosphoglycerate = phosphoenolpyruvate + H2O. It functions in the pathway carbohydrate degradation; glycolysis; pyruvate from D-glyceraldehyde 3-phosphate: step 4/5. In terms of biological role, catalyzes the reversible conversion of 2-phosphoglycerate (2-PG) into phosphoenolpyruvate (PEP). It is essential for the degradation of carbohydrates via glycolysis. 'Moonlights' as a plasminogen receptor and plasmin activator. Binds host (human) plasminogen in vitro. Binds human plasmin and plasminogen on the cell surface; enhances the activity of host tissue-specific plasminogen activator (tPA). Plasmin bound to bacteria is partially protected from its physiological inhibitor alpha-2AP (SERPINF2). In Aeromonas hydrophila, this protein is Enolase.